Reading from the N-terminus, the 119-residue chain is Holo-[acyl-carrier-protein] synthase (119 aa).

Mg(2+) contacts are provided by Asp2 and Glu51.

This sequence belongs to the P-Pant transferase superfamily. AcpS family. Mg(2+) is required as a cofactor.

The protein localises to the cytoplasm. It catalyses the reaction apo-[ACP] + CoA = holo-[ACP] + adenosine 3',5'-bisphosphate + H(+). Functionally, transfers the 4'-phosphopantetheine moiety from coenzyme A to a Ser of acyl-carrier-protein. This is Holo-[acyl-carrier-protein] synthase from Chlorobium luteolum (strain DSM 273 / BCRC 81028 / 2530) (Pelodictyon luteolum).